The chain runs to 237 residues: MANSTGKPTSSTQEDEEVTYILAQLMQDVMDREEDIDDEDDIDDEVASLPLLLVSQANQKQSRKREEKTEKNQPKRVKNQNIMKINIHDFSEETLRLIEDWYNAELDPQDIFGDDEVTRRFSRPIKKQLMSSDVDTDQSRLMLSKEQVKEKMLPFLEESEDPVKGVDVSVYGPDGEVQQMKFKMWNGDKTPVLTSGWMQFVADYGLLKTSDFVTDGKVSQLEHVFIRGSKVRCCNTS.

Residues 53 to 79 (LVSQANQKQSRKREEKTEKNQPKRVKN) form a disordered region. The segment covering 64–73 (KREEKTEKNQ) has biased composition (basic and acidic residues). Positions 126 to 230 (KKQLMSSDVD…LEHVFIRGSK (105 aa)) form a DNA-binding region, TF-B3.

The protein resides in the nucleus. This chain is B3 domain-containing protein At1g20600, found in Arabidopsis thaliana (Mouse-ear cress).